The primary structure comprises 154 residues: Endoribonuclease YbeY (154 aa).

Positions 113, 117, and 123 each coordinate Zn(2+).

It belongs to the endoribonuclease YbeY family. Zn(2+) serves as cofactor.

The protein localises to the cytoplasm. Its function is as follows. Single strand-specific metallo-endoribonuclease involved in late-stage 70S ribosome quality control and in maturation of the 3' terminus of the 16S rRNA. The protein is Endoribonuclease YbeY of Vibrio campbellii (strain ATCC BAA-1116).